A 121-amino-acid chain; its full sequence is Histone H2A.Z-specific chaperone chz1 (121 aa).

Residues 1–11 are compositionally biased toward polar residues; sequence MSAQTGSTNVS. Disordered stretches follow at residues 1 to 45 and 62 to 121; these read MSAQ…SQGL and VEEE…MGGN. Residues 98–121 are compositionally biased toward acidic residues; sequence AEDDEDEDDDFQSEGEDDDEMGGN.

Belongs to the CHZ1 family. Forms a heterotrimer with H2A.Z-H2B, stabilizing the association of the histone dimer. Also, with a lower affinity, forms a heterotrimer with H2A-H2B.

It is found in the nucleus. Its function is as follows. Forms a chaperone-bound H2A.Z-H2B complex that acts as a source for SWR1 complex-dependent H2A to H2A.Z histone replacement in chromatin. This is Histone H2A.Z-specific chaperone chz1 (chz1) from Sclerotinia sclerotiorum (strain ATCC 18683 / 1980 / Ss-1) (White mold).